The chain runs to 847 residues: Leucine--tRNA ligase (847 aa).

A 'HIGH' region motif is present at residues 43 to 53 (PYPSGKLHMGH). Residues 607–611 (KMSKS) carry the 'KMSKS' region motif. Residue Lys-610 coordinates ATP.

This sequence belongs to the class-I aminoacyl-tRNA synthetase family.

It is found in the cytoplasm. The enzyme catalyses tRNA(Leu) + L-leucine + ATP = L-leucyl-tRNA(Leu) + AMP + diphosphate. This is Leucine--tRNA ligase from Buchnera aphidicola subsp. Cinara cedri (strain Cc).